Consider the following 113-residue polypeptide: Prefoldin subunit beta (113 aa).

It belongs to the prefoldin subunit beta family. As to quaternary structure, heterohexamer of two alpha and four beta subunits.

It localises to the cytoplasm. Molecular chaperone capable of stabilizing a range of proteins. Seems to fulfill an ATP-independent, HSP70-like function in archaeal de novo protein folding. This is Prefoldin subunit beta from Methanococcus vannielii (strain ATCC 35089 / DSM 1224 / JCM 13029 / OCM 148 / SB).